A 313-amino-acid chain; its full sequence is Secretory carrier-associated membrane protein 4 (313 aa).

A disordered region spans residues 1-69; the sequence is MAGRSRYDNP…LPPEPADFYN (69 aa). Over 1 to 148 the chain is Cytoplasmic; sequence MAGRSRYDNP…EIPVHLQRTQ (148 aa). Positions 85–116 form a coiled coil; the sequence is MKTREKELLAKEAELNRREKEIKRREEAAARA. 4 helical membrane-spanning segments follow: residues 149–169, 181–201, 216–236, and 255–275; these read YVAF…IICV, IWFL…YLWY, FGWF…AAVS, and LIGN…MFCL. The Cytoplasmic portion of the chain corresponds to 276 to 313; sequence ESLLSMWVIQRVYLYFRGSGKEAEMKREAARSAARAAF.

Belongs to the SCAMP family.

The protein localises to the cell membrane. The protein resides in the cytoplasmic vesicle. It localises to the secretory vesicle membrane. In terms of biological role, probably involved in membrane trafficking. The chain is Secretory carrier-associated membrane protein 4 (SCAMP4) from Oryza sativa subsp. japonica (Rice).